Reading from the N-terminus, the 355-residue chain is Anthranilate phosphoribosyltransferase (355 aa).

5-phospho-alpha-D-ribose 1-diphosphate-binding positions include Gly-102, 105 to 106 (GD), Ser-110, 112 to 115 (NIST), 130 to 138 (KHGNRSVSS), and Ser-142. Gly-102 contributes to the anthranilate binding site. Residue Ser-114 coordinates Mg(2+). An anthranilate-binding site is contributed by Asn-133. Arg-188 lines the anthranilate pocket. Asp-246 and Glu-247 together coordinate Mg(2+).

It belongs to the anthranilate phosphoribosyltransferase family. As to quaternary structure, homodimer. Mg(2+) serves as cofactor.

The catalysed reaction is N-(5-phospho-beta-D-ribosyl)anthranilate + diphosphate = 5-phospho-alpha-D-ribose 1-diphosphate + anthranilate. It functions in the pathway amino-acid biosynthesis; L-tryptophan biosynthesis; L-tryptophan from chorismate: step 2/5. Catalyzes the transfer of the phosphoribosyl group of 5-phosphorylribose-1-pyrophosphate (PRPP) to anthranilate to yield N-(5'-phosphoribosyl)-anthranilate (PRA). This is Anthranilate phosphoribosyltransferase from Pectobacterium atrosepticum (strain SCRI 1043 / ATCC BAA-672) (Erwinia carotovora subsp. atroseptica).